A 200-amino-acid chain; its full sequence is MRGKFITFEGIDGAGKSTHIEWVAERLRARANVVTTREPGGTPLGEDLRQLLLHRKMHLETEALLMFAARREHIAEVIEPALARGDWVISDRFTDATFAYQGGGRGLALDRLATLEQWVQSGLQPDLTLLFDVPLETASARLAGAREPDKFEAESRAFFERTRTEYLRRAAEAPQRFRVIDATRSIDEIRVALEEIIATL.

10–17 (GIDGAGKS) lines the ATP pocket.

Belongs to the thymidylate kinase family.

The catalysed reaction is dTMP + ATP = dTDP + ADP. Its function is as follows. Phosphorylation of dTMP to form dTDP in both de novo and salvage pathways of dTTP synthesis. This Cupriavidus metallidurans (strain ATCC 43123 / DSM 2839 / NBRC 102507 / CH34) (Ralstonia metallidurans) protein is Thymidylate kinase.